The primary structure comprises 44 residues: Photosystem I reaction center subunit IX (44 aa).

The helical transmembrane segment at 7–27 (YLSVAPVVSTLWFAALAGLLI) threads the bilayer.

The protein belongs to the PsaJ family.

The protein resides in the plastid. It is found in the chloroplast thylakoid membrane. May help in the organization of the PsaE and PsaF subunits. This Lotus japonicus (Lotus corniculatus var. japonicus) protein is Photosystem I reaction center subunit IX.